The sequence spans 139 residues: Nuclear receptor 2C2-associated protein (139 aa).

Belongs to the NR2C2AP family. In terms of assembly, interacts with NR2C2/TR4. Expressed in all tissues examined, with highest expression in heart, skeletal muscle and pancreas.

The protein resides in the nucleus. May act as a repressor of NR2C2-mediated transactivation by suppressing the binding between NR2C2/TR4 and the TR4-response element in target genes. The sequence is that of Nuclear receptor 2C2-associated protein (NR2C2AP) from Homo sapiens (Human).